The following is a 648-amino-acid chain: Threonine--tRNA ligase (648 aa).

A TGS domain is found at 1-63 (MAQISLTFPD…TQDAAIAIHT (63 aa)). Residues 247–544 (DHRKLGREMN…LIEEHAGKLP (298 aa)) form a catalytic region. Residues Cys-344, His-395, and His-521 each coordinate Zn(2+).

The protein belongs to the class-II aminoacyl-tRNA synthetase family. As to quaternary structure, homodimer. Zn(2+) serves as cofactor.

It localises to the cytoplasm. The enzyme catalyses tRNA(Thr) + L-threonine + ATP = L-threonyl-tRNA(Thr) + AMP + diphosphate + H(+). Its function is as follows. Catalyzes the attachment of threonine to tRNA(Thr) in a two-step reaction: L-threonine is first activated by ATP to form Thr-AMP and then transferred to the acceptor end of tRNA(Thr). Also edits incorrectly charged L-seryl-tRNA(Thr). The protein is Threonine--tRNA ligase of Ruegeria sp. (strain TM1040) (Silicibacter sp.).